The chain runs to 88 residues: Phosphocarrier protein HPr (88 aa).

In terms of domain architecture, HPr spans 1-88 (MKKFQAVIKD…KACLEKNKVI (88 aa)). Histidine 15 serves as the catalytic Pros-phosphohistidine intermediate. Serine 47 carries the post-translational modification Phosphoserine; by HPrK/P.

The protein belongs to the HPr family.

The protein localises to the cytoplasm. Phosphorylation on Ser-47 inhibits the phosphoryl transfer from enzyme I to HPr. Its function is as follows. General (non sugar-specific) component of the phosphoenolpyruvate-dependent sugar phosphotransferase system (sugar PTS). This major carbohydrate active-transport system catalyzes the phosphorylation of incoming sugar substrates concomitantly with their translocation across the cell membrane. The phosphoryl group from phosphoenolpyruvate (PEP) is transferred to the phosphoryl carrier protein HPr by enzyme I. Phospho-HPr then transfers it to the PTS EIIA domain. P-Ser-HPr interacts with the catabolite control protein A (CcpA), forming a complex that binds to DNA at the catabolite response elements cre, operator sites preceding a large number of catabolite-regulated genes. Thus, P-Ser-HPr is a corepressor in carbon catabolite repression (CCR), a mechanism that allows bacteria to coordinate and optimize the utilization of available carbon sources. P-Ser-HPr also plays a role in inducer exclusion, in which it probably interacts with several non-PTS permeases and inhibits their transport activity. The protein is Phosphocarrier protein HPr (ptsH) of Mycoplasma genitalium (strain ATCC 33530 / DSM 19775 / NCTC 10195 / G37) (Mycoplasmoides genitalium).